A 297-amino-acid polypeptide reads, in one-letter code: T-cell leukemia homeobox protein 1 (297 aa).

The interval 153-174 (DRFTGHPYQNRTPPKKKKPRTS) is disordered. A DNA-binding region (homeobox) is located at residues 168–227 (KKKPRTSFTRLQICELEKRFHRQKYLASAERAALAKALKMTDAQVKTWFQNRRTKWRRQT).

The protein localises to the nucleus. Its function is as follows. Seems to be involved in the development of cranial sensory innervation from peripheral ganglia. In Gallus gallus (Chicken), this protein is T-cell leukemia homeobox protein 1 (TLX1).